Consider the following 195-residue polypeptide: Peptidyl-tRNA hydrolase (195 aa).

TRNA is bound at residue tyrosine 18. Histidine 23 acts as the Proton acceptor in catalysis. Residues tyrosine 69, asparagine 71, and asparagine 117 each coordinate tRNA.

It belongs to the PTH family. In terms of assembly, monomer.

Its subcellular location is the cytoplasm. It catalyses the reaction an N-acyl-L-alpha-aminoacyl-tRNA + H2O = an N-acyl-L-amino acid + a tRNA + H(+). In terms of biological role, hydrolyzes ribosome-free peptidyl-tRNAs (with 1 or more amino acids incorporated), which drop off the ribosome during protein synthesis, or as a result of ribosome stalling. Its function is as follows. Catalyzes the release of premature peptidyl moieties from peptidyl-tRNA molecules trapped in stalled 50S ribosomal subunits, and thus maintains levels of free tRNAs and 50S ribosomes. The polypeptide is Peptidyl-tRNA hydrolase (Nitrosomonas eutropha (strain DSM 101675 / C91 / Nm57)).